The primary structure comprises 635 residues: Probable serine/threonine-protein kinase DDB_G0270146 (635 aa).

Residues 77 to 329 (VISDIAIGKG…AKELLSHPWI (253 aa)) form the Protein kinase domain. ATP is bound by residues 83 to 91 (IGKGAFATV) and lysine 106. Catalysis depends on aspartate 199, which acts as the Proton acceptor. Residues 360-392 (SLLSNSSGGDDSVTDSDLSISNQSSRSSSFLLD) are compositionally biased toward low complexity. The segment at 360–405 (SLLSNSSGGDDSVTDSDLSISNQSSRSSSFLLDDGGGGGGSKNHTV) is disordered. 2 coiled-coil regions span residues 417-456 (IEFN…KYRE) and 536-585 (KKAL…KDSS). Residues 540 to 582 (EAQKRREKEQEKLKEQEKLKEKKKEKDIKKEKDKKDKKDKQLK) show a composition bias toward basic and acidic residues. The interval 540–635 (EAQKRREKEQ…GRSSSKIFNE (96 aa)) is disordered. The span at 583–598 (DSSSSTTTTNSTPSTP) shows a compositional bias: low complexity. Over residues 626–635 (GRSSSKIFNE) the composition is skewed to polar residues.

It belongs to the protein kinase superfamily. STE Ser/Thr protein kinase family. It depends on Mg(2+) as a cofactor.

The enzyme catalyses L-seryl-[protein] + ATP = O-phospho-L-seryl-[protein] + ADP + H(+). It carries out the reaction L-threonyl-[protein] + ATP = O-phospho-L-threonyl-[protein] + ADP + H(+). In Dictyostelium discoideum (Social amoeba), this protein is Probable serine/threonine-protein kinase DDB_G0270146.